Consider the following 89-residue polypeptide: Large ribosomal subunit protein bL27 (89 aa).

A disordered region spans residues 1–24 (MAHKKGTGSTRNGRDSRSQRLGVK).

This sequence belongs to the bacterial ribosomal protein bL27 family.

This Microcystis aeruginosa (strain NIES-843 / IAM M-2473) protein is Large ribosomal subunit protein bL27.